The chain runs to 914 residues: TRPM8 channel-associated factor 2 (914 aa).

One can recognise a Peptidase M60 domain in the interval 541-840 (DAWMSTGLNL…TYLQLQEAFG (300 aa)).

The protein belongs to the TCAF family. As to quaternary structure, interacts with TRPM8 (via N-terminus and C-terminus domains); the interaction inhibits TRPM8 channel activity. Interacts with TRPV6.

It is found in the cell membrane. Its function is as follows. Negatively regulates the plasma membrane cation channel TRPM8 activity. Involved in the recruitment of TRPM8 to the cell surface. Promotes prostate cancer cell migration stimulation in a TRPM8-dependent manner. The polypeptide is TRPM8 channel-associated factor 2 (Bos taurus (Bovine)).